A 30-amino-acid polypeptide reads, in one-letter code: Cyclotide hyen-D (30 aa).

The segment at residues 1-30 (GFPCGESCVYIPCFTAAIGCSCKSKVCYKN) is a cross-link (cyclopeptide (Gly-Asn)). Intrachain disulfides connect cysteine 4–cysteine 20, cysteine 8–cysteine 22, and cysteine 13–cysteine 27.

In terms of processing, this is a cyclic peptide. Detected in stems (at protein level).

Functionally, probably participates in a plant defense mechanism. Has strong cytotoxic activity against HUVEC cells (LC(50)= 0.58 uM) and various cancer cells including HeLa (LC(50)= 0.48 uM), MCF-7 and K562. Also displays some hemolytic activity. Binds to and induces leakage in phospholipd membranes, particularly ones containing 1-palmitoyl-2-oleophosphatidylethanolamine (POPE). This chain is Cyclotide hyen-D, found in Pigea enneasperma (Spade flower).